Here is a 253-residue protein sequence, read N- to C-terminus: Tetraspanin-11 (253 aa).

The next 3 helical transmembrane spans lie at 19-39 (LLFV…AVGI), 63-83 (ILIF…GAIL), and 93-113 (YFCL…LAHV). N127 is a glycosylation site (N-linked (GlcNAc...) asparagine). Residues 220-240 (LLLMGAVGIGVACLQICGMVL) traverse the membrane as a helical segment.

This sequence belongs to the tetraspanin (TM4SF) family.

It localises to the membrane. The sequence is that of Tetraspanin-11 (TSPAN11) from Homo sapiens (Human).